We begin with the raw amino-acid sequence, 230 residues long: 5'-methylthioadenosine/S-adenosylhomocysteine nucleosidase (230 aa).

Glutamate 12 acts as the Proton acceptor in catalysis. Substrate contacts are provided by residues glycine 78, isoleucine 153, and 174 to 175 (ME). Residue aspartate 198 is the Proton donor of the active site.

Belongs to the PNP/UDP phosphorylase family. MtnN subfamily.

The enzyme catalyses S-adenosyl-L-homocysteine + H2O = S-(5-deoxy-D-ribos-5-yl)-L-homocysteine + adenine. It carries out the reaction S-methyl-5'-thioadenosine + H2O = 5-(methylsulfanyl)-D-ribose + adenine. It catalyses the reaction 5'-deoxyadenosine + H2O = 5-deoxy-D-ribose + adenine. Its pathway is amino-acid biosynthesis; L-methionine biosynthesis via salvage pathway; S-methyl-5-thio-alpha-D-ribose 1-phosphate from S-methyl-5'-thioadenosine (hydrolase route): step 1/2. In terms of biological role, catalyzes the irreversible cleavage of the glycosidic bond in both 5'-methylthioadenosine (MTA) and S-adenosylhomocysteine (SAH/AdoHcy) to adenine and the corresponding thioribose, 5'-methylthioribose and S-ribosylhomocysteine, respectively. Also cleaves 5'-deoxyadenosine, a toxic by-product of radical S-adenosylmethionine (SAM) enzymes, into 5-deoxyribose and adenine. The chain is 5'-methylthioadenosine/S-adenosylhomocysteine nucleosidase from Shewanella sediminis (strain HAW-EB3).